A 353-amino-acid polypeptide reads, in one-letter code: 3-dehydroquinate synthase (353 aa).

NAD(+) is bound by residues 62–67 (DGEQYK), 96–100 (GVIGD), 120–121 (TT), lysine 133, and lysine 142. Zn(2+) contacts are provided by glutamate 175, histidine 236, and histidine 253.

This sequence belongs to the sugar phosphate cyclases superfamily. Dehydroquinate synthase family. NAD(+) serves as cofactor. Requires Co(2+) as cofactor. It depends on Zn(2+) as a cofactor.

The protein resides in the cytoplasm. It carries out the reaction 7-phospho-2-dehydro-3-deoxy-D-arabino-heptonate = 3-dehydroquinate + phosphate. It functions in the pathway metabolic intermediate biosynthesis; chorismate biosynthesis; chorismate from D-erythrose 4-phosphate and phosphoenolpyruvate: step 2/7. Its function is as follows. Catalyzes the conversion of 3-deoxy-D-arabino-heptulosonate 7-phosphate (DAHP) to dehydroquinate (DHQ). This is 3-dehydroquinate synthase from Helicobacter hepaticus (strain ATCC 51449 / 3B1).